The chain runs to 127 residues: MCRCSADSSPVDVKDILNRLKSLSAAEEFFEALGVPYDPKVLDVSRLHIMKRMGQYLAAEDFSHLPDRVIAARARAILERAYCDFATSAPLSHRVFKVLKDHNPNRPVTPGRTVVPLDSFLKPFEKK.

It belongs to the NifW family. Homotrimer; associates with NifD.

Functionally, may protect the nitrogenase Fe-Mo protein from oxidative damage. The polypeptide is Nitrogenase-stabilizing/protective protein NifW (Rhizobium etli (strain ATCC 51251 / DSM 11541 / JCM 21823 / NBRC 15573 / CFN 42)).